The following is a 360-amino-acid chain: D-alanine--D-alanine ligase (360 aa).

The ATP-grasp domain maps to lysine 134 to glutamine 343. Alanine 169 to glutamate 224 provides a ligand contact to ATP. Residues aspartate 297, glutamate 310, and asparagine 312 each contribute to the Mg(2+) site.

This sequence belongs to the D-alanine--D-alanine ligase family. The cofactor is Mg(2+). Mn(2+) serves as cofactor.

Its subcellular location is the cytoplasm. It catalyses the reaction 2 D-alanine + ATP = D-alanyl-D-alanine + ADP + phosphate + H(+). Its pathway is cell wall biogenesis; peptidoglycan biosynthesis. Cell wall formation. The polypeptide is D-alanine--D-alanine ligase (Lactobacillus acidophilus (strain ATCC 700396 / NCK56 / N2 / NCFM)).